A 417-amino-acid chain; its full sequence is Gamma-glutamyl phosphate reductase (417 aa).

The protein belongs to the gamma-glutamyl phosphate reductase family.

Its subcellular location is the cytoplasm. The catalysed reaction is L-glutamate 5-semialdehyde + phosphate + NADP(+) = L-glutamyl 5-phosphate + NADPH + H(+). It participates in amino-acid biosynthesis; L-proline biosynthesis; L-glutamate 5-semialdehyde from L-glutamate: step 2/2. Functionally, catalyzes the NADPH-dependent reduction of L-glutamate 5-phosphate into L-glutamate 5-semialdehyde and phosphate. The product spontaneously undergoes cyclization to form 1-pyrroline-5-carboxylate. In Desulfitobacterium hafniense (strain DSM 10664 / DCB-2), this protein is Gamma-glutamyl phosphate reductase.